Here is a 342-residue protein sequence, read N- to C-terminus: Phenylalanine--tRNA ligase alpha subunit (342 aa).

Glu255 is a binding site for Mg(2+).

The protein belongs to the class-II aminoacyl-tRNA synthetase family. Phe-tRNA synthetase alpha subunit type 1 subfamily. Tetramer of two alpha and two beta subunits. Mg(2+) is required as a cofactor.

The protein resides in the cytoplasm. The enzyme catalyses tRNA(Phe) + L-phenylalanine + ATP = L-phenylalanyl-tRNA(Phe) + AMP + diphosphate + H(+). This chain is Phenylalanine--tRNA ligase alpha subunit, found in Pelodictyon phaeoclathratiforme (strain DSM 5477 / BU-1).